The following is a 492-amino-acid chain: Glycosyltransferase alg8 (492 aa).

The next 4 helical transmembrane spans lie at 13 to 32 (GWLLFLSFLMLVAVALPPQV), 47 to 69 (IGVWRYSMGIIHFLRGMLFLYVV), 379 to 401 (LTVAIIGSIKYSIAIFIAYLLWV), and 421 to 443 (PAYPLILYYNQIVGAVVKIHVFF).

Belongs to the glycosyltransferase 2 family.

It is found in the cell membrane. It participates in glycan biosynthesis; alginate biosynthesis. Its function is as follows. Possibly a processive enzyme that polymerizes GDP-mannuronic acid. The sequence is that of Glycosyltransferase alg8 (alg8) from Azotobacter vinelandii.